The primary structure comprises 448 residues: MKPVIAIVGRPNVGKSTLFNRLTGRRDAIVADFAGLTRDRHYGDGKLDNHEFIVIDTGGFEPDSTSGIYKEMAKQTRQAVAEADAVVFVVDVRAGLSAQDHDIARYLRATGKRVLLAANKAEGMKDGPQLAEFYELGMGEPLAVSSAHGQGVRSLIEMALEGIEPPEPEEGYSEEELRNRPTRLAVAGRPNVGKSTLINTWLGEERLVAFDLPGTTRDAIHVPFERGDKKYELIDTAGLRRKGKVFESIEKFSVVKTLQAISDANVVLLLIDATEGVSDQDAHIAGYVLDAGRAVVIAINKWDAIDSYQRETLQRSIEQRLAFLKFAPVLMISAKKRQGLGPLWKAIDDAWASATRKLPTPQLTRLLLEAVEYQQPKRAGAVRPKLRYAHQGGQNPPIIVIHGNAVEHVTEVYKRYLEARFREHFKLVGTPMRIELRASHNPFVSKDS.

EngA-type G domains follow at residues 3–167 (PVIA…EPPE) and 182–355 (TRLA…ASAT). GTP-binding positions include 9–16 (GRPNVGKS), 56–60 (DTGGF), 119–122 (NKAE), 188–195 (GRPNVGKS), 235–239 (DTAGL), and 300–303 (NKWD). The 85-residue stretch at 356-440 (RKLPTPQLTR…PMRIELRASH (85 aa)) folds into the KH-like domain.

This sequence belongs to the TRAFAC class TrmE-Era-EngA-EngB-Septin-like GTPase superfamily. EngA (Der) GTPase family. In terms of assembly, associates with the 50S ribosomal subunit.

In terms of biological role, GTPase that plays an essential role in the late steps of ribosome biogenesis. In Leptothrix cholodnii (strain ATCC 51168 / LMG 8142 / SP-6) (Leptothrix discophora (strain SP-6)), this protein is GTPase Der.